A 294-amino-acid polypeptide reads, in one-letter code: Nucleotide-binding protein Dtur_1129 (294 aa).

10–17 is a binding site for ATP; sequence GLSGAGKS. 61 to 64 is a binding site for GTP; the sequence is DIRT.

Belongs to the RapZ-like family.

Functionally, displays ATPase and GTPase activities. The chain is Nucleotide-binding protein Dtur_1129 from Dictyoglomus turgidum (strain DSM 6724 / Z-1310).